A 297-amino-acid polypeptide reads, in one-letter code: Large ribosomal subunit protein uL24m (297 aa).

N-acetylserine is present on serine 2. The KOW domain maps to 63–96; sequence FIPGDRVVVMSGASKGNIAVIKSFDKRTNSFILD.

It belongs to the universal ribosomal protein uL24 family. In terms of assembly, component of the mitochondrial large ribosomal subunit (mt-LSU). Mature yeast 74S mitochondrial ribosomes consist of a small (37S) and a large (54S) subunit. The 37S small subunit contains a 15S ribosomal RNA (15S mt-rRNA) and 34 different proteins. The 54S large subunit contains a 21S rRNA (21S mt-rRNA) and 46 different proteins. uL24m forms the wall of the exit tunnel.

It localises to the mitochondrion. Component of the mitochondrial ribosome (mitoribosome), a dedicated translation machinery responsible for the synthesis of mitochondrial genome-encoded proteins, including at least some of the essential transmembrane subunits of the mitochondrial respiratory chain. The mitoribosomes are attached to the mitochondrial inner membrane and translation products are cotranslationally integrated into the membrane. This chain is Large ribosomal subunit protein uL24m (MRPL40), found in Saccharomyces cerevisiae (strain ATCC 204508 / S288c) (Baker's yeast).